A 404-amino-acid chain; its full sequence is Glucose-1-phosphate adenylyltransferase (404 aa).

Alpha-D-glucose 1-phosphate is bound by residues Y99, G164, 179-180 (EK), and S197.

The protein belongs to the bacterial/plant glucose-1-phosphate adenylyltransferase family. Homotetramer.

The catalysed reaction is alpha-D-glucose 1-phosphate + ATP + H(+) = ADP-alpha-D-glucose + diphosphate. It participates in glycan biosynthesis; glycogen biosynthesis. Functionally, involved in the biosynthesis of ADP-glucose, a building block required for the elongation reactions to produce glycogen. Catalyzes the reaction between ATP and alpha-D-glucose 1-phosphate (G1P) to produce pyrophosphate and ADP-Glc. This is Glucose-1-phosphate adenylyltransferase from Nocardia farcinica (strain IFM 10152).